A 216-amino-acid chain; its full sequence is Chloramphenicol acetyltransferase (216 aa).

Residue His189 is the Proton acceptor of the active site.

This sequence belongs to the chloramphenicol acetyltransferase family. In terms of assembly, homotrimer.

It carries out the reaction chloramphenicol + acetyl-CoA = chloramphenicol 3-acetate + CoA. This enzyme is an effector of chloramphenicol resistance in bacteria. This chain is Chloramphenicol acetyltransferase (cat), found in Staphylococcus aureus.